The chain runs to 358 residues: PqqA peptide cyclase (358 aa).

One can recognise a Radical SAM core domain in the interval 4-219 (PSPPMSLLAE…VEAERAKGGL (216 aa)). [4Fe-4S] cluster-binding residues include cysteine 18, cysteine 22, and cysteine 25.

It belongs to the radical SAM superfamily. PqqE family. As to quaternary structure, interacts with PqqD. The interaction is necessary for activity of PqqE. [4Fe-4S] cluster is required as a cofactor.

The enzyme catalyses [PQQ precursor protein] + S-adenosyl-L-methionine = E-Y cross-linked-[PQQ precursor protein] + 5'-deoxyadenosine + L-methionine + H(+). Its pathway is cofactor biosynthesis; pyrroloquinoline quinone biosynthesis. Its function is as follows. Catalyzes the cross-linking of a glutamate residue and a tyrosine residue in the PqqA protein as part of the biosynthesis of pyrroloquinoline quinone (PQQ). The polypeptide is PqqA peptide cyclase (Gluconobacter oxydans (strain 621H) (Gluconobacter suboxydans)).